A 490-amino-acid polypeptide reads, in one-letter code: Bifunctional protein GlmU (490 aa).

Residues 1 to 241 (MSSPGDTAVL…SALVAGVNNR (241 aa)) form a pyrophosphorylase region. UDP-N-acetyl-alpha-D-glucosamine is bound by residues 12–15 (LAAG), Lys26, Gln83, 88–89 (GT), 112–114 (SGD), Gly151, Glu166, Asn181, and Asn239. Asp114 provides a ligand contact to Mg(2+). Asn239 is a Mg(2+) binding site. Residues 242–262 (VQLAQLGAELNRRIVAAHQLA) form a linker region. The interval 263–490 (GVTVVDPATT…AGGRPAGEAE (228 aa)) is N-acetyltransferase. UDP-N-acetyl-alpha-D-glucosamine is bound by residues Arg344 and Lys362. Residue His374 is the Proton acceptor of the active site. Positions 377 and 388 each coordinate UDP-N-acetyl-alpha-D-glucosamine. Acetyl-CoA-binding positions include Ala391, 397–398 (NY), Ser416, and Ala434. Residues 462–490 (RRKRPGSAAARAAEAAEKAAGGRPAGEAE) form a disordered region. Residues 467-490 (GSAAARAAEAAEKAAGGRPAGEAE) show a composition bias toward low complexity.

This sequence in the N-terminal section; belongs to the N-acetylglucosamine-1-phosphate uridyltransferase family. In the C-terminal section; belongs to the transferase hexapeptide repeat family. In terms of assembly, homotrimer. Mg(2+) is required as a cofactor.

The protein resides in the cytoplasm. It carries out the reaction alpha-D-glucosamine 1-phosphate + acetyl-CoA = N-acetyl-alpha-D-glucosamine 1-phosphate + CoA + H(+). The catalysed reaction is N-acetyl-alpha-D-glucosamine 1-phosphate + UTP + H(+) = UDP-N-acetyl-alpha-D-glucosamine + diphosphate. It functions in the pathway nucleotide-sugar biosynthesis; UDP-N-acetyl-alpha-D-glucosamine biosynthesis; N-acetyl-alpha-D-glucosamine 1-phosphate from alpha-D-glucosamine 6-phosphate (route II): step 2/2. It participates in nucleotide-sugar biosynthesis; UDP-N-acetyl-alpha-D-glucosamine biosynthesis; UDP-N-acetyl-alpha-D-glucosamine from N-acetyl-alpha-D-glucosamine 1-phosphate: step 1/1. The protein operates within bacterial outer membrane biogenesis; LPS lipid A biosynthesis. Its function is as follows. Catalyzes the last two sequential reactions in the de novo biosynthetic pathway for UDP-N-acetylglucosamine (UDP-GlcNAc). The C-terminal domain catalyzes the transfer of acetyl group from acetyl coenzyme A to glucosamine-1-phosphate (GlcN-1-P) to produce N-acetylglucosamine-1-phosphate (GlcNAc-1-P), which is converted into UDP-GlcNAc by the transfer of uridine 5-monophosphate (from uridine 5-triphosphate), a reaction catalyzed by the N-terminal domain. The polypeptide is Bifunctional protein GlmU (Mycobacterium avium (strain 104)).